Reading from the N-terminus, the 282-residue chain is Ammonia transport outward protein 2 (282 aa).

The interval 1-34 (MSDREQSSGNTAFENPKALDSSEGEFISENNDQS) is disordered. S2 carries the N-acetylserine modification. Phosphoserine is present on residues S2, S7, S21, S22, S28, and S40. The Extracellular segment spans residues 2–86 (SDREQSSGNT…GLAPAPVHKF (85 aa)). A helical transmembrane segment spans residues 87–107 (ANPAPLGLSGFALTTFVLSMF). Over 108-119 (NARAQGITIPNV) the chain is Cytoplasmic. The chain crosses the membrane as a helical span at residues 120-140 (VVGCAMFYGGLVQLIAGIWEI). Over 141-150 (ALENTFGGTA) the chain is Extracellular. A helical transmembrane segment spans residues 151–171 (LCSFGGFWLSFGAIYIPWFGI). Residues 172-184 (LDAYKDKESDLGN) are Cytoplasmic-facing. Residues 185-205 (ALGFYLLGWALFTFGLSVCTM) form a helical membrane-spanning segment. Residues 206 to 207 (KS) lie on the Extracellular side of the membrane. Residues 208 to 228 (TIMFFALFFLLAVTFLLLSIA) form a helical membrane-spanning segment. Residues 229–238 (NFTGEVGVTR) are Cytoplasmic-facing. The chain crosses the membrane as a helical span at residues 239–259 (AGGVLGVIVAFIAWYNAYAGI). The Extracellular segment spans residues 260–282 (ATRQNSYIMVHPFALPSNDKVFF).

It belongs to the acetate uptake transporter (AceTr) (TC 2.A.96) family.

The protein localises to the cell membrane. Its function is as follows. Transporter protein required for ammonia export. Involved in acetate resistance. In Saccharomyces cerevisiae (strain ATCC 204508 / S288c) (Baker's yeast), this protein is Ammonia transport outward protein 2 (ATO2).